Here is a 227-residue protein sequence, read N- to C-terminus: Probable septum site-determining protein MinC (227 aa).

Belongs to the MinC family. Interacts with MinD and FtsZ.

Cell division inhibitor that blocks the formation of polar Z ring septums. Rapidly oscillates between the poles of the cell to destabilize FtsZ filaments that have formed before they mature into polar Z rings. Prevents FtsZ polymerization. The chain is Probable septum site-determining protein MinC from Geobacillus thermodenitrificans (strain NG80-2).